A 181-amino-acid chain; its full sequence is Cyclic phosphodiesterase (181 aa).

His-42 functions as the Proton donor/acceptor in the catalytic mechanism. Thr-44 provides a ligand contact to substrate. Intrachain disulfides connect Cys-64/Cys-177 and Cys-104/Cys-110. His-119 serves as the catalytic Proton donor/acceptor. Substrate-binding residues include Ser-121 and Tyr-124.

It belongs to the 2H phosphoesterase superfamily. CPD1 family. Expressed in leaves, stems, roots, floral buds and germinating seeds.

It is found in the cytoplasm. The enzyme catalyses ADP-alpha-D-ribose 1'',2''-cyclic phosphate + H2O = ADP-alpha-D-ribose 1''-phosphate + H(+). It carries out the reaction 2',3'-cyclophospho-AMP + H2O = adenosine 2'-phosphate + H(+). The catalysed reaction is 2',3'-cyclophospho-GMP + H2O = guanosine 2'-phosphate + H(+). It catalyses the reaction 2',3'-cyclophospho-UMP + H2O = uridine 2'-phosphate + H(+). The enzyme catalyses 2',3'-cyclophospho-CMP + H2O = cytidine 2'-phosphate + H(+). With respect to regulation, inhibited by Cu(2+) and Zn(2+) at 0.5 mM by 93 and 87% respectively. Not inhibited by Ca(2+), Mg(2+), Co(2+), Ni(2+), and EDTA at 0.5 mM. Its function is as follows. Hydrolyzes ADP-ribose 1'',2''-cyclic phosphate (Appr&gt;1) that is produced during tRNA splicing into ADP-ribose 1''-phosphate (Appr-1''p). Also acts on nucleoside 2',3'-cyclic phosphates. The polypeptide is Cyclic phosphodiesterase (Arabidopsis thaliana (Mouse-ear cress)).